The following is a 377-amino-acid chain: Alanine racemase, catabolic (377 aa).

Residue Lys51 is the Proton acceptor; specific for D-alanine of the active site. At Lys51 the chain carries N6-(pyridoxal phosphate)lysine. Arg150 is a substrate binding site. Catalysis depends on Tyr272, which acts as the Proton acceptor; specific for L-alanine. Met320 is a substrate binding site.

This sequence belongs to the alanine racemase family. Requires pyridoxal 5'-phosphate as cofactor.

It catalyses the reaction L-alanine = D-alanine. Functionally, isomerizes L-alanine to D-alanine which is then oxidized to pyruvate by DadA. The polypeptide is Alanine racemase, catabolic (dadX) (Rhizobium johnstonii (strain DSM 114642 / LMG 32736 / 3841) (Rhizobium leguminosarum bv. viciae)).